The chain runs to 557 residues: T-complex protein 1 subunit theta-like 2 (557 aa).

2 disordered regions span residues M1–L33 and E531–N557.

It belongs to the TCP-1 chaperonin family.

Its subcellular location is the cytoplasm. Possible molecular chaperone; assists the folding of proteins upon ATP hydrolysis. The sequence is that of T-complex protein 1 subunit theta-like 2 (CCT8L2) from Homo sapiens (Human).